The sequence spans 441 residues: Enolase (441 aa).

Gln164 is a (2R)-2-phosphoglycerate binding site. The active-site Proton donor is Glu206. Positions 243, 289, and 316 each coordinate Mg(2+). Residues Lys341, Arg370, Ser371, and Lys392 each contribute to the (2R)-2-phosphoglycerate site. Residue Lys341 is the Proton acceptor of the active site.

The protein belongs to the enolase family. The cofactor is Mg(2+).

The protein resides in the cytoplasm. It localises to the secreted. It is found in the cell surface. The catalysed reaction is (2R)-2-phosphoglycerate = phosphoenolpyruvate + H2O. The protein operates within carbohydrate degradation; glycolysis; pyruvate from D-glyceraldehyde 3-phosphate: step 4/5. In terms of biological role, catalyzes the reversible conversion of 2-phosphoglycerate (2-PG) into phosphoenolpyruvate (PEP). It is essential for the degradation of carbohydrates via glycolysis. This chain is Enolase, found in Leuconostoc mesenteroides subsp. mesenteroides (strain ATCC 8293 / DSM 20343 / BCRC 11652 / CCM 1803 / JCM 6124 / NCDO 523 / NBRC 100496 / NCIMB 8023 / NCTC 12954 / NRRL B-1118 / 37Y).